The primary structure comprises 447 residues: F-box only protein 5 (447 aa).

2 positions are modified to phosphoserine: Ser-94 and Ser-102. Residues 135–244 form an interaction with EVI5 region; sequence ALETSRLYED…IGRKMGLECV (110 aa). Residues 250-296 enclose the F-box domain; sequence LFRRGLRHVLATILAQLSDMDLINVSKVSTTWKKILEDDKGAFQLYS. Positions 261–339 are sufficient for interaction with RPS6KA2; Prevents association of CDC20 with RPS6KA2; it reads TILAQLSDMD…KSAAQTSLKK (79 aa). Residues 261 to 409 are requires for efficient binding to CDC20; the sequence is TILAQLSDMD…GCGFDYCTKC (149 aa). The segment at 305-447 is inhibits APC ubiquitin ligase activity; that stretch reads NNNKFSPHAS…KKSKKNLRRL (143 aa). The interval 322 to 325 is competitively blocks access of APC substrates to the D-box coreceptor formed by FZR1 and ANAPC10; sequence RTPL. Residues 337–358 are disordered; the sequence is LKKDAQTKLSNQGDQKGSTYSR. A compositionally biased stretch (polar residues) spans 343 to 357; that stretch reads TKLSNQGDQKGSTYS. A ZBR-type zinc finger spans residues 374–422; that stretch reads SLKACIRCNSPAKYDCYLQRATCKREGCGFDYCTKCLCNYHTTKDCSDG. Zn(2+) contacts are provided by Cys-378, Cys-381, Cys-396, Cys-401, Cys-406, Cys-409, His-414, and Cys-419. The interval 378-420 is allows a rapid multiple mono-ubiquitination of the APC substrate, but strongly inhibits the slow ubiquitin chain elongation catalyzed by UBCH10; the sequence is CIRCNSPAKYDCYLQRATCKREGCGFDYCTKCLCNYHTTKDCS. The tract at residues 437-447 is sufficient to suppress UBE2S activity; essential for interaction with UBE2S; competitively inhibits the rapide ubiquitin chain elongation by UBE2D1 which blocks UBE2D1 with APC; indispensable for recruitment and position of FBXO5 to the catalytic site of APC; abrogates the inhibition of ubiquitin chain assembly primarily catalyzed by UBE2S; inhibits the ubiquitination by either UBE2C or UBE2D1; that stretch reads TKKSKKNLRRL.

As to quaternary structure, part of a SCF (SKP1-cullin-F-box) protein ligase complex. Interacts with BTRC; mediates proteolysis by the SCF ubiquitin ligase complex leading to activation of APC in late mitosis and subsequent mitotic progression. Interacts with FZR1/CDH1 and the N-terminal substrate-binding domain of CDC20; prevents APC activation. Also interacts with EVI5 which blocks its phosphorylation by PLK1 and prevents its subsequent binding to BTRC and degradation. Interacts simultaneously with anaphase promoting complex (APC), through at least ANAPC2, CDC23, CDC27, the APC substrate GMNN and the APC activator FZR1. Interacts with UBE2S; interferes with the activity of UBE2S mainly by disrupting the dynamic electrostatic association between the C-terminal tail of UBE2S and ANAPC2. Interacts with RPS6KA2; cooperates to induce the metaphase arrest of early blastomeres; increases and stabilizes interaction of FBXO5 with CDC20. Phosphorylation by CDK2 and subsequently by PLK1 triggers degradation during early mitosis through ubiquitin-mediated proteolysis by the SCF ubiquitin ligase complex containing the F-box protein BTRC. This degradation is necessary for the activation of APC in late mitosis and subsequent mitotic progression. Phosphorylated by RPS6KA2; increases and stabilizes interaction with CDC20. In terms of processing, ubiquitinated by the SCF(BTRC) complex following phosphorylation by PLK1. Undergoes both 'Lys-11' and 'Lys-48'-linked polyubiquitination by APC-FZR1 complex leading to degradation by proteasome during G1 phase. Degraded through the SCF(BTRC) complex; degradation occurs during oocyte maturation, between germinal vesicle breakdown (GVBD) and meiosis I, and is required for the meiosis I-meiosis II transition.

It localises to the nucleus. Its subcellular location is the cytoplasm. The protein localises to the cytoskeleton. The protein resides in the spindle. It functions in the pathway protein modification; protein ubiquitination. Regulator of APC activity during mitotic and meiotic cell cycle. During mitotic cell cycle plays a role as both substrate and inhibitor of APC-FZR1 complex. During G1 phase, plays a role as substrate of APC-FZR1 complex E3 ligase. Then switches as an inhibitor of APC-FZR1 complex during S and G2 leading to cell-cycle commitment. As APC inhibitor, prevents the degradation of APC substrates at multiple levels: by interacting with APC and blocking access of APC substrates to the D-box coreceptor, formed by FZR1 and ANAPC10; by suppressing ubiquitin ligation and chain elongation by APC by preventing the UBE2C and UBE2S activities. Plays a role in genome integrity preservation by coordinating DNA replication with mitosis through APC inhibition in interphase to stabilize CCNA2 and GMNN in order to promote mitosis and prevent rereplication and DNA damage-induced cellular senescence. During oocyte maturation, plays a role in meiosis through inactivation of APC-FZR1 complex. Inhibits APC through RPS6KA2 interaction that increases FBXO5 affiniy for CDC20 leading to the metaphase arrest of the second meiotic division before fertilization. Controls entry into the first meiotic division through inactivation of APC-FZR1 complex. Promotes migration and osteogenic differentiation of mesenchymal stem cells. The protein is F-box only protein 5 of Homo sapiens (Human).